The primary structure comprises 175 residues: Translation initiation factor IF-3 (175 aa).

This sequence belongs to the IF-3 family. In terms of assembly, monomer.

The protein resides in the cytoplasm. In terms of biological role, IF-3 binds to the 30S ribosomal subunit and shifts the equilibrium between 70S ribosomes and their 50S and 30S subunits in favor of the free subunits, thus enhancing the availability of 30S subunits on which protein synthesis initiation begins. This Staphylococcus aureus (strain USA300) protein is Translation initiation factor IF-3.